The chain runs to 130 residues: Small ribosomal subunit protein uS9 (130 aa).

It belongs to the universal ribosomal protein uS9 family.

The sequence is that of Small ribosomal subunit protein uS9 from Aeromonas salmonicida (strain A449).